The primary structure comprises 139 residues: Large ribosomal subunit protein uL16 (139 aa).

Belongs to the universal ribosomal protein uL16 family. Part of the 50S ribosomal subunit.

In terms of biological role, binds 23S rRNA and is also seen to make contacts with the A and possibly P site tRNAs. This chain is Large ribosomal subunit protein uL16, found in Protochlamydia amoebophila (strain UWE25).